We begin with the raw amino-acid sequence, 237 residues long: Ribonuclease PH (237 aa).

Residues arginine 86 and 124–126 (GTR) each bind phosphate.

This sequence belongs to the RNase PH family. As to quaternary structure, homohexameric ring arranged as a trimer of dimers.

It carries out the reaction tRNA(n+1) + phosphate = tRNA(n) + a ribonucleoside 5'-diphosphate. Its function is as follows. Phosphorolytic 3'-5' exoribonuclease that plays an important role in tRNA 3'-end maturation. Removes nucleotide residues following the 3'-CCA terminus of tRNAs; can also add nucleotides to the ends of RNA molecules by using nucleoside diphosphates as substrates, but this may not be physiologically important. Probably plays a role in initiation of 16S rRNA degradation (leading to ribosome degradation) during starvation. In Shewanella frigidimarina (strain NCIMB 400), this protein is Ribonuclease PH.